The sequence spans 238 residues: MKGILGRKVEMTQVFTANGKLVPVTVVEVQPNTILQVKTLETNGYVATQLGVFDKRENLVNKPELGQFKKANSVPKRFVKEIRNMEGFEVGSVISASDIFETGQYVDVTGISKGKGFAGAIKRHNYSRGPMAHGSGYHRGIGSMGAIINRIFKSKKMAGHMGHVKRTVQNLEVIAIDNNIMLVKGSIPGPNKGFVTIKANVKGLSNTQAAELLVRNAPVATEAPIEAPVVEEVVSTEE.

It belongs to the universal ribosomal protein uL3 family. Part of the 50S ribosomal subunit. Forms a cluster with proteins L14 and L19.

Functionally, one of the primary rRNA binding proteins, it binds directly near the 3'-end of the 23S rRNA, where it nucleates assembly of the 50S subunit. The sequence is that of Large ribosomal subunit protein uL3 from Mesoplasma florum (strain ATCC 33453 / NBRC 100688 / NCTC 11704 / L1) (Acholeplasma florum).